Reading from the N-terminus, the 268-residue chain is Phosphatidylcholine synthase (268 aa).

Over 1–27 (MAARKAAKKLTDRIPRPKKKVTWPQAR) the chain is Cytoplasmic. The helical transmembrane segment at 28-48 (AFSVHLLTASGSFLAFLSLVA) threads the bilayer. The Periplasmic segment spans residues 49–53 (ASEER). The helical transmembrane segment at 54 to 74 (WTAMFWWLGLALFVDGIDGPI) threads the bilayer. The Cytoplasmic portion of the chain corresponds to 75–88 (ARKLEVKEILPTWS). The chain crosses the membrane as a helical span at residues 89-109 (GELLDNIIDYVTYVLIPAFAL). At 110 to 112 (YQR) the chain is on the periplasmic side. Residues 113-133 (GFMGEGLSFLSAAIIVVSSAI) traverse the membrane as a helical segment. The Cytoplasmic segment spans residues 134–145 (YYADTGMKTKEN). Residues 146 to 166 (FFKGFPVVWNMVVFTLFVIEP) form a helical membrane-spanning segment. The Periplasmic segment spans residues 167–168 (GQ). Residues 169–189 (WVSFAVVVVAGILTFVPINFI) traverse the membrane as a helical segment. Over 190–203 (HPVRVVRLRPFNLT) the chain is Cytoplasmic. A helical membrane pass occupies residues 204 to 224 (MTLLWCAFGALALAQAALAAF). The Periplasmic segment spans residues 225–240 (YDQIGVLGAQVSTFIK). The helical transmembrane segment at 241-261 (IGITITGLYLACIGGIMQFFP) threads the bilayer. At 262-268 (NLGAKKA) the chain is on the cytoplasmic side.

It belongs to the CDP-alcohol phosphatidyltransferase class-I family. Mn(2+) serves as cofactor.

Its subcellular location is the cell inner membrane. The catalysed reaction is a CDP-1,2-diacyl-sn-glycerol + choline = a 1,2-diacyl-sn-glycero-3-phosphocholine + CMP + H(+). Functionally, condenses choline with CDP-diglyceride to produce phosphatidylcholine and CMP. This is Phosphatidylcholine synthase (pcs) from Mesorhizobium japonicum (strain LMG 29417 / CECT 9101 / MAFF 303099) (Mesorhizobium loti (strain MAFF 303099)).